The primary structure comprises 232 residues: Enolase-phosphatase E1 (232 aa).

Belongs to the HAD-like hydrolase superfamily. MasA/MtnC family. Monomer. It depends on Mg(2+) as a cofactor.

The enzyme catalyses 5-methylsulfanyl-2,3-dioxopentyl phosphate + H2O = 1,2-dihydroxy-5-(methylsulfanyl)pent-1-en-3-one + phosphate. The protein operates within amino-acid biosynthesis; L-methionine biosynthesis via salvage pathway; L-methionine from S-methyl-5-thio-alpha-D-ribose 1-phosphate: step 3/6. It functions in the pathway amino-acid biosynthesis; L-methionine biosynthesis via salvage pathway; L-methionine from S-methyl-5-thio-alpha-D-ribose 1-phosphate: step 4/6. Functionally, bifunctional enzyme that catalyzes the enolization of 2,3-diketo-5-methylthiopentyl-1-phosphate (DK-MTP-1-P) into the intermediate 2-hydroxy-3-keto-5-methylthiopentenyl-1-phosphate (HK-MTPenyl-1-P), which is then dephosphorylated to form the acireductone 1,2-dihydroxy-3-keto-5-methylthiopentene (DHK-MTPene). This is Enolase-phosphatase E1 from Acidiphilium cryptum (strain JF-5).